A 152-amino-acid polypeptide reads, in one-letter code: ESAT-6 secretion machinery protein EssA (152 aa).

Residues 1 to 114 (MLMNSVIALT…PYIQNKQEKK (114 aa)) are Cytoplasmic-facing. Residues 115 to 135 (IFPYILMSVGAFLTLGFVIFS) form a helical membrane-spanning segment. Residues 136–152 (IHKGRRTKNESARKSNI) lie on the Extracellular side of the membrane.

Belongs to the EssA family.

The protein resides in the cell membrane. Component of the ESAT-6 secretion system (Ess). Required for the secretion of EsxA. This Staphylococcus aureus (strain MRSA252) protein is ESAT-6 secretion machinery protein EssA.